The sequence spans 268 residues: Orotidine 5'-phosphate decarboxylase (268 aa).

Substrate is bound by residues Asp37, 59–61, 91–100, Tyr217, and Arg235; these read KTH and DRKFADIGNT. Lys93 (proton donor) is an active-site residue.

The protein belongs to the OMP decarboxylase family.

The catalysed reaction is orotidine 5'-phosphate + H(+) = UMP + CO2. It participates in pyrimidine metabolism; UMP biosynthesis via de novo pathway; UMP from orotate: step 2/2. The chain is Orotidine 5'-phosphate decarboxylase (URA4) from Maudiozyma exigua (Yeast).